Here is a 293-residue protein sequence, read N- to C-terminus: 4-hydroxy-tetrahydrodipicolinate synthase (293 aa).

Ser-45 contacts pyruvate. Tyr-133 serves as the catalytic Proton donor/acceptor. Residue Lys-161 is the Schiff-base intermediate with substrate of the active site. Ile-203 contacts pyruvate.

This sequence belongs to the DapA family. As to quaternary structure, homotetramer; dimer of dimers.

It is found in the cytoplasm. It carries out the reaction L-aspartate 4-semialdehyde + pyruvate = (2S,4S)-4-hydroxy-2,3,4,5-tetrahydrodipicolinate + H2O + H(+). The protein operates within amino-acid biosynthesis; L-lysine biosynthesis via DAP pathway; (S)-tetrahydrodipicolinate from L-aspartate: step 3/4. Catalyzes the condensation of (S)-aspartate-beta-semialdehyde [(S)-ASA] and pyruvate to 4-hydroxy-tetrahydrodipicolinate (HTPA). This is 4-hydroxy-tetrahydrodipicolinate synthase from Psychromonas ingrahamii (strain DSM 17664 / CCUG 51855 / 37).